We begin with the raw amino-acid sequence, 425 residues long: UPF0229 protein YE2273 (425 aa).

Residues 84–110 (TNDRIERPQGGGGGSGSGQGNAGQDGE) are disordered. Gly residues predominate over residues 92–108 (QGGGGGSGSGQGNAGQD).

This sequence belongs to the UPF0229 family.

In Yersinia enterocolitica serotype O:8 / biotype 1B (strain NCTC 13174 / 8081), this protein is UPF0229 protein YE2273.